Here is a 140-residue protein sequence, read N- to C-terminus: Small ribosomal subunit protein uS12 (140 aa).

Residues 1–28 form a disordered region; that stretch reads MPTINQLVRKSRKALEKKSTAPALQKGY. Aspartate 102 is modified (3-methylthioaspartic acid). A disordered region spans residues 119–140; that stretch reads GVDKRRQSRSKYGAKRPKEAKK. The segment covering 124–140 has biased composition (basic residues); it reads RQSRSKYGAKRPKEAKK.

Belongs to the universal ribosomal protein uS12 family. As to quaternary structure, part of the 30S ribosomal subunit. Contacts proteins S8 and S17. May interact with IF1 in the 30S initiation complex.

Its function is as follows. With S4 and S5 plays an important role in translational accuracy. Interacts with and stabilizes bases of the 16S rRNA that are involved in tRNA selection in the A site and with the mRNA backbone. Located at the interface of the 30S and 50S subunits, it traverses the body of the 30S subunit contacting proteins on the other side and probably holding the rRNA structure together. The combined cluster of proteins S8, S12 and S17 appears to hold together the shoulder and platform of the 30S subunit. The chain is Small ribosomal subunit protein uS12 from Clostridioides difficile (strain 630) (Peptoclostridium difficile).